Consider the following 420-residue polypeptide: Acyl-coenzyme A amino acid N-acyltransferase 2 (420 aa).

Active-site charge relay system residues include serine 235, aspartate 329, and histidine 363. The Microbody targeting signal motif lies at 418-420 (SKL).

This sequence belongs to the C/M/P thioester hydrolase family.

It is found in the peroxisome. Functionally, acyltransferase which efficiently conjugates very long-chain and long-chain fatty acids to taurine. Shows no conjugation activity in the presence of glycine. This is Acyl-coenzyme A amino acid N-acyltransferase 2 from Mus musculus (Mouse).